Consider the following 3387-residue polypeptide: Genome polyprotein (3387 aa).

Residues 1–100 (MNQRKKVVRP…LNILNGRKRS (100 aa)) lie on the Cytoplasmic side of the membrane. The segment at 36 to 71 (LFSGKGPLRMVLAFITFLRVLSIPPTAGILKRWGQL) is hydrophobic; homodimerization of capsid protein C. Residues 100-113 (STMTLLCLIPTVMA) constitute a propeptide, ER anchor for the capsid protein C, removed in mature form by serine protease NS3. A helical membrane pass occupies residues 101-117 (TMTLLCLIPTVMAFHLS). The Extracellular portion of the chain corresponds to 118–237 (TRDGEPLMIV…GAWKHAQRVE (120 aa)). N182 carries N-linked (GlcNAc...) asparagine; by host glycosylation. Residues 238–258 (SWILRNPGFALLAGFMAYMIG) form a helical membrane-spanning segment. The Cytoplasmic segment spans residues 259–265 (QTGIQRT). Residues 266-279 (VFFVLMMLVAPSYG) traverse the membrane as a helical segment. The Extracellular segment spans residues 280-723 (MRCVGVGNRD…AVHQVFGSVY (444 aa)). 4 cysteine pairs are disulfide-bonded: C282-C309, C339-C400, C353-C384, and C371-C395. N346 is a glycosylation site (N-linked (GlcNAc...) asparagine; by host). Residues 377 to 390 (DRGWGNGCGLFGKG) form a fusion peptide region. N-linked (GlcNAc...) asparagine; by host glycosylation is present at N432. 2 disulfide bridges follow: C464-C564 and C581-C612. A helical membrane pass occupies residues 724–744 (TTMFGGVSWMVRILIGFLVLW). Over 745 to 750 (IGTNSR) the chain is Cytoplasmic. The chain crosses the membrane as a helical span at residues 751 to 771 (NTSMAMTCIAVGGITLFLGFT). Residues 772 to 1194 (VQADMGCVVS…MLGDTMSGRI (423 aa)) lie on the Extracellular side of the membrane. 6 disulfide bridges follow: C778–C789, C829–C917, C953–C997, C1054–C1103, C1065–C1087, and C1086–C1090. N-linked (GlcNAc...) asparagine; by host glycosylation is found at N904 and N981. A helical transmembrane segment spans residues 1195–1218 (GGQVHLAIMAVFKMSPGYVLGVFL). At 1219–1224 (RKLTSR) the chain is on the lumenal side. Residues 1225–1243 (ETALMVIGMAMTTVLSIPH) traverse the membrane as a helical segment. The Cytoplasmic segment spans residues 1244–1267 (DLMELIDGISLGLILLKIVTQFDN). A helical transmembrane segment spans residues 1268–1288 (TQVGTLALSLTFIRSTMPLVM). A topological domain (lumenal) is located at residue A1289. A helical transmembrane segment spans residues 1290-1308 (WRTIMAVLFVVTLIPLCRT). The Lumenal segment spans residues 1309-1316 (SCLQKQSH). Residues 1317–1337 (WVEITALILGAQALPVYLMTL) form a helical membrane-spanning segment. Over 1338-1345 (MKGASRRS) the chain is Cytoplasmic. Residues 1346–1366 (WPLNEGIMAVGLVSLLGSALL) form a helical membrane-spanning segment. The Lumenal segment spans residues 1367 to 1369 (KND). A helical membrane pass occupies residues 1370 to 1390 (VPLAGPMVAGGLLLAAYVMSG). Topologically, residues 1391 to 1437 (SSADLSLEKAANVQWDEMADITGSSPIIEVKQDEDGSFSIRDVEETN) are cytoplasmic. The interval 1397-1436 (LEKAANVQWDEMADITGSSPIIEVKQDEDGSFSIRDVEET) is interacts with and activates NS3 protease. Positions 1438-1458 (MITLLVKLALITVSGLYPLAI) form an intramembrane region, helical. At 1459 to 2143 (PVTMTLWYMW…QHALNELPES (685 aa)) the chain is on the cytoplasmic side. The Peptidase S7 domain maps to 1475 to 1652 (SGALWDVPSP…ERIGEPDYEV (178 aa)). Active-site charge relay system; for serine protease NS3 activity residues include H1525, D1549, and S1609. A Helicase ATP-binding domain is found at 1654–1810 (EDIFRKKRLT…QSNSPIEDIE (157 aa)). The important for RNA-binding stretch occupies residues 1658 to 1661 (RKKR). 1667–1674 (LHPGAGKT) contributes to the ATP binding site. Positions 1758–1761 (DEAH) match the DEAH box motif. Positions 1820–1987 (TGFDWITDYQ…IIPTLFGPER (168 aa)) constitute a Helicase C-terminal domain. Residue K1862 is modified to N6-acetyllysine; by host. The chain crosses the membrane as a helical span at residues 2144–2164 (LETLMLVALLGAMTAGTFLFF). Residues 2165-2169 (MQGKG) lie on the Lumenal side of the membrane. The helical intramembrane region spans 2170 to 2190 (IGKLSMGLITIAVASGLLWVA). Position 2191 (E2191) is a topological domain, lumenal. Residues 2192 to 2212 (LQPQWIAASIILEFFLMVLLI) form a helical membrane-spanning segment. Residues 2213–2225 (PEPEKQRTPQDNQ) lie on the Cytoplasmic side of the membrane. Residues 2226–2246 (LIYVILTILTIIGLIAANEMG) form a helical membrane-spanning segment. Residues 2247–2270 (LIEKTKTDFGFYQVKTETTILDVD) lie on the Lumenal side of the membrane. Residues 2271 to 2291 (LRPASAWTLYAVATTILTPML) constitute an intramembrane region (helical). The Lumenal portion of the chain corresponds to 2292–2301 (RHTIENTSAN). N2297 and N2301 each carry an N-linked (GlcNAc...) asparagine; by host glycan. Residues 2302–2322 (LSLAAIANQAAVLMGLGKGWP) constitute an intramembrane region (helical). At 2323–2343 (LHRVDLGVPLLAMGCYSQVNP) the chain is on the lumenal side. A helical membrane pass occupies residues 2344 to 2364 (TTLTASLVMLLVHYAIIGPGL). Residues 2365-2409 (QAKATREAQKRTAAGIMKNPTVDGITVIDLEPISYDPKFEKQLGQ) are Cytoplasmic-facing. The helical transmembrane segment at 2410–2430 (VMLLVLCAGQLLLMRTTWAFC) threads the bilayer. The Lumenal segment spans residues 2431-2455 (EVLTLATGPILTLWEGNPGRFWNTT). N2453 carries an N-linked (GlcNAc...) asparagine; by host glycan. The helical transmembrane segment at 2456 to 2476 (IAVSTANIFRGSYLAGAGLAF) threads the bilayer. Residues 2477 to 3387 (SLIKNAQTPR…SAPSESEGVL (911 aa)) lie on the Cytoplasmic side of the membrane. The mRNA cap 0-1 NS5-type MT domain maps to 2489–2751 (TGTTGETLGE…DVDLGAGTRS (263 aa)). S2543 serves as a coordination point for S-adenosyl-L-methionine. S2543 bears the Phosphoserine mark. K2548 serves as the catalytic For 2'-O-MTase activity. The SUMO-interacting motif motif lies at 2564–2567 (VVDL). Residues G2573, W2574, T2591, K2592, D2618, and V2619 each contribute to the S-adenosyl-L-methionine site. D2633 functions as the For 2'-O-MTase activity in the catalytic mechanism. I2634 contributes to the S-adenosyl-L-methionine binding site. Residues K2668 and E2704 each act as for 2'-O-MTase activity in the active site. Y2706 contributes to the S-adenosyl-L-methionine binding site. Zn(2+) contacts are provided by E2925, H2929, C2934, and C2937. Residues 3016–3166 (LMYADDTAGW…PLDERFSTSL (151 aa)) form the RdRp catalytic domain. Positions 3200, 3216, and 3335 each coordinate Zn(2+).

In the N-terminal section; belongs to the class I-like SAM-binding methyltransferase superfamily. mRNA cap 0-1 NS5-type methyltransferase family. In terms of assembly, homodimer. Interacts (via N-terminus) with host EXOC1 (via C-terminus); this interaction results in EXOC1 degradation through the proteasome degradation pathway. Forms heterodimers with envelope protein E in the endoplasmic reticulum and Golgi. As to quaternary structure, homodimer; in the endoplasmic reticulum and Golgi. Interacts with protein prM. Interacts with non-structural protein 1. In terms of assembly, homodimer; Homohexamer when secreted. Interacts with envelope protein E. Interacts (via N-terminus) with serine protease NS3. As to quaternary structure, forms a heterodimer with serine protease NS3. May form homooligomers. In terms of assembly, forms a heterodimer with NS2B. Interacts with NS4B. Interacts with unphosphorylated RNA-directed RNA polymerase NS5; this interaction stimulates RNA-directed RNA polymerase NS5 guanylyltransferase activity. Interacts with host SHFL. Interacts with host MAVS; this interaction inhibits the synthesis of IFN-beta. Interacts with host SHFL. Interacts with host AUP1; the interaction occurs in the presence of Dengue virus NS4B and induces lipophagy which facilitates production of virus progeny particles. As to quaternary structure, interacts with serine protease NS3. In terms of assembly, homodimer. Interacts with host STAT2; this interaction inhibits the phosphorylation of the latter, and, when all viral proteins are present (polyprotein), targets STAT2 for degradation. Interacts with serine protease NS3. Interacts with host PAF1 complex; the interaction may prevent the recruitment of the PAF1 complex to interferon-responsive genes, and thus reduces the immune response. In terms of processing, specific enzymatic cleavages in vivo yield mature proteins. Cleavages in the lumen of endoplasmic reticulum are performed by host signal peptidase, whereas cleavages in the cytoplasmic side are performed by serine protease NS3. Signal cleavage at the 2K-4B site requires a prior NS3 protease-mediated cleavage at the 4A-2K site. Cleaved in post-Golgi vesicles by a host furin, releasing the mature small envelope protein M, and peptide pr. This cleavage is incomplete as up to 30% of viral particles still carry uncleaved prM. Post-translationally, N-glycosylated. In terms of processing, N-glycosylated. The excreted form is glycosylated and this is required for efficient secretion of the protein from infected cells. Acetylated by host KAT5. Acetylation modulates NS3 RNA-binding and unwinding activities and plays an important positive role for viral replication. Post-translationally, sumoylation of RNA-directed RNA polymerase NS5 increases NS5 protein stability allowing proper viral RNA replication. In terms of processing, phosphorylated on serines residues. This phosphorylation may trigger NS5 nuclear localization.

It localises to the virion. Its subcellular location is the host nucleus. The protein localises to the host cytoplasm. The protein resides in the host perinuclear region. It is found in the secreted. It localises to the virion membrane. Its subcellular location is the host endoplasmic reticulum membrane. The protein localises to the host mitochondrion. It catalyses the reaction Selective hydrolysis of -Xaa-Xaa-|-Yaa- bonds in which each of the Xaa can be either Arg or Lys and Yaa can be either Ser or Ala.. It carries out the reaction RNA(n) + a ribonucleoside 5'-triphosphate = RNA(n+1) + diphosphate. The enzyme catalyses a ribonucleoside 5'-triphosphate + H2O = a ribonucleoside 5'-diphosphate + phosphate + H(+). The catalysed reaction is ATP + H2O = ADP + phosphate + H(+). It catalyses the reaction a 5'-end (5'-triphosphoguanosine)-ribonucleoside in mRNA + S-adenosyl-L-methionine = a 5'-end (N(7)-methyl 5'-triphosphoguanosine)-ribonucleoside in mRNA + S-adenosyl-L-homocysteine. It carries out the reaction a 5'-end (N(7)-methyl 5'-triphosphoguanosine)-ribonucleoside in mRNA + S-adenosyl-L-methionine = a 5'-end (N(7)-methyl 5'-triphosphoguanosine)-(2'-O-methyl-ribonucleoside) in mRNA + S-adenosyl-L-homocysteine + H(+). Functionally, plays a role in virus budding by binding to the cell membrane and gathering the viral RNA into a nucleocapsid that forms the core of a mature virus particle. During virus entry, may induce genome penetration into the host cytoplasm after hemifusion induced by the surface proteins. Can migrate to the cell nucleus where it modulates host functions. Overcomes the anti-viral effects of host EXOC1 by sequestering and degrading the latter through the proteasome degradation pathway. Inhibits RNA silencing by interfering with host Dicer. Its function is as follows. Prevents premature fusion activity of envelope proteins in trans-Golgi by binding to envelope protein E at pH6.0. After virion release in extracellular space, gets dissociated from E dimers. In terms of biological role, acts as a chaperone for envelope protein E during intracellular virion assembly by masking and inactivating envelope protein E fusion peptide. prM is the only viral peptide matured by host furin in the trans-Golgi network probably to avoid catastrophic activation of the viral fusion activity in acidic Golgi compartment prior to virion release. prM-E cleavage is inefficient, and many virions are only partially matured. These uncleaved prM would play a role in immune evasion. Functionally, may play a role in virus budding. Exerts cytotoxic effects by activating a mitochondrial apoptotic pathway through M ectodomain. May display a viroporin activity. Binds to host cell surface receptor and mediates fusion between viral and cellular membranes. Envelope protein is synthesized in the endoplasmic reticulum in the form of heterodimer with protein prM. They play a role in virion budding in the ER, and the newly formed immature particle is covered with 60 spikes composed of heterodimer between precursor prM and envelope protein E. The virion is transported to the Golgi apparatus where the low pH causes dissociation of PrM-E heterodimers and formation of E homodimers. prM-E cleavage is inefficient, and many virions are only partially matured. These uncleaved prM would play a role in immune evasion. Its function is as follows. Involved in immune evasion, pathogenesis and viral replication. Once cleaved off the polyprotein, is targeted to three destinations: the viral replication cycle, the plasma membrane and the extracellular compartment. Essential for viral replication. Required for formation of the replication complex and recruitment of other non-structural proteins to the ER-derived membrane structures. Excreted as a hexameric lipoparticle that plays a role against host immune response. Antagonizing the complement function. Binds to the host macrophages and dendritic cells. Inhibits signal transduction originating from Toll-like receptor 3 (TLR3). In terms of biological role, disrupts the host endothelial glycocalyx layer of host pulmonary microvascular endothelial cells, inducing degradation of sialic acid and shedding of heparan sulfate proteoglycans. NS1 induces expression of sialidases, heparanase, and activates cathepsin L, which activates heparanase via enzymatic cleavage. These effects are probably linked to the endothelial hyperpermeability observed in severe dengue disease. Functionally, component of the viral RNA replication complex that functions in virion assembly and antagonizes the host immune response. Required cofactor for the serine protease function of NS3. May have membrane-destabilizing activity and form viroporins. Its function is as follows. Displays three enzymatic activities: serine protease, NTPase and RNA helicase. NS3 serine protease, in association with NS2B, performs its autocleavage and cleaves the polyprotein at dibasic sites in the cytoplasm: C-prM, NS2A-NS2B, NS2B-NS3, NS3-NS4A, NS4A-2K and NS4B-NS5. NS3 RNA helicase binds RNA and unwinds dsRNA in the 3' to 5' direction. In terms of biological role, regulates the ATPase activity of the NS3 helicase activity. NS4A allows NS3 helicase to conserve energy during unwinding. Plays a role in the inhibition of the host innate immune response. Interacts with host MAVS and thereby prevents the interaction between RIGI and MAVS. In turn, IFN-beta production is impaired. Interacts with host AUP1 which mediates induction of lipophagy in host cells and facilitates production of virus progeny particles. Functionally, functions as a signal peptide for NS4B and is required for the interferon antagonism activity of the latter. Induces the formation of ER-derived membrane vesicles where the viral replication takes place. Inhibits interferon (IFN)-induced host STAT1 phosphorylation and nuclear translocation, thereby preventing the establishment of cellular antiviral state by blocking the IFN-alpha/beta pathway. Its function is as follows. Replicates the viral (+) and (-) RNA genome, and performs the capping of genomes in the cytoplasm. NS5 methylates viral RNA cap at guanine N-7 and ribose 2'-O positions. Besides its role in RNA genome replication, also prevents the establishment of cellular antiviral state by blocking the interferon-alpha/beta (IFN-alpha/beta) signaling pathway. Inhibits host TYK2 and STAT2 phosphorylation, thereby preventing activation of JAK-STAT signaling pathway. May reduce immune responses by preventing the recruitment of the host PAF1 complex to interferon-responsive genes. This is Genome polyprotein from Dengue virus type 4 (strain Singapore/8976/1995) (DENV-4).